A 123-amino-acid polypeptide reads, in one-letter code: uncharacterized protein (123 aa).

Residues 36–76 adopt a coiled-coil conformation; it reads VDRQENKKEFLSAEEAREKFKELINQVRSWKEQMSTLSKYA.

This is an uncharacterized protein from Aquifex aeolicus (strain VF5).